Reading from the N-terminus, the 242-residue chain is Mannosyl-3-phosphoglycerate phosphatase (242 aa).

Catalysis depends on Asp8, which acts as the Nucleophile. Residues Asp8, Asp10, Ser169, and Asp204 each coordinate Mg(2+).

It belongs to the HAD-like hydrolase superfamily. MPGP family. It depends on Mg(2+) as a cofactor.

The protein resides in the cytoplasm. The catalysed reaction is 2-O-(alpha-D-mannosyl)-3-phosphoglycerate + H2O = (2R)-2-O-(alpha-D-mannosyl)-glycerate + phosphate. It participates in carbohydrate biosynthesis; 2-(alpha-D-mannosyl)-D-glycerate biosynthesis; 2-(alpha-D-mannosyl)-D-glycerate from GDP-alpha-D-mannose (MPG route): step 2/2. Its function is as follows. Hydrolyzes mannosyl-3-phosphoglycerate (MPG) to form the osmolyte mannosylglycerate (MG). This Pyrococcus furiosus (strain ATCC 43587 / DSM 3638 / JCM 8422 / Vc1) protein is Mannosyl-3-phosphoglycerate phosphatase.